Reading from the N-terminus, the 300-residue chain is Phosphoribosylaminoimidazole-succinocarboxamide synthase (300 aa).

This sequence belongs to the SAICAR synthetase family.

It carries out the reaction 5-amino-1-(5-phospho-D-ribosyl)imidazole-4-carboxylate + L-aspartate + ATP = (2S)-2-[5-amino-1-(5-phospho-beta-D-ribosyl)imidazole-4-carboxamido]succinate + ADP + phosphate + 2 H(+). It functions in the pathway purine metabolism; IMP biosynthesis via de novo pathway; 5-amino-1-(5-phospho-D-ribosyl)imidazole-4-carboxamide from 5-amino-1-(5-phospho-D-ribosyl)imidazole-4-carboxylate: step 1/2. The protein is Phosphoribosylaminoimidazole-succinocarboxamide synthase of Methylibium petroleiphilum (strain ATCC BAA-1232 / LMG 22953 / PM1).